A 422-amino-acid chain; its full sequence is Vitamin D3 receptor (422 aa).

The nuclear receptor DNA-binding region spans 21-96 (PRICGVCGDR…IGMMKEFILT (76 aa)). The Zn(2+) site is built by cysteine 24, cysteine 27, cysteine 41, cysteine 44, cysteine 60, cysteine 66, cysteine 76, and cysteine 79. 2 NR C4-type zinc fingers span residues 24–44 (CGVC…CEGC) and 60–84 (CPFN…LKRC). Residues 97-126 (DEEVQRKREMIMKRKEEEALKDSLRPKLSE) are hinge. Positions 127-418 (EQQHIIAILL…LTPLVLEVFG (292 aa)) constitute an NR LBD domain. Tyrosine 143 provides a ligand contact to calcitriol. The interval 161–185 (VSTGSYSPRPTLSFSGDSSSNSDLY) is disordered. The segment covering 162 to 172 (STGSYSPRPTL) has biased composition (polar residues). The span at 173-182 (SFSGDSSSNS) shows a compositional bias: low complexity. Serine 232 is a binding site for calcitriol. Residues 241 to 259 (KMIPGFRDLTSDDQIVLLK) are interaction with coactivator LXXLL motif. 4 residues coordinate calcitriol: arginine 269, serine 273, histidine 300, and histidine 392. Residues 411-419 (PLVLEVFGN) carry the 9aaTAD motif.

Belongs to the nuclear hormone receptor family. NR1 subfamily. In terms of assembly, homodimer in the absence of bound vitamin D3. Heterodimer with RXRA after vitamin D3 binding. Interacts with MED1, NCOA1, NCOA2, NCOA3 and NCOA6 coactivators, leading to a strong increase of transcription of target genes. Interacts with the corepressor NCOR1. Interacts with SNW1. Interacts with IRX4, the interaction does not affect its transactivation activity. Interacts with CRY1. Interacts with CRY2 in a ligand-dependent manner. Ubiquitinated by UBR5, leading to its degradation: UBR5 specifically recognizes and binds ligand-bound VDR when it is not associated with coactivators (NCOAs). In presence of NCOAs, the UBR5-degron is not accessible, preventing its ubiquitination and degradation.

It is found in the nucleus. It localises to the cytoplasm. In terms of biological role, nuclear receptor for calcitriol, the active form of vitamin D3 which mediates the action of this vitamin on cells. Enters the nucleus upon vitamin D3 binding where it forms heterodimers with the retinoid X receptor/RXR. The VDR-RXR heterodimers bind to specific response elements on DNA and activate the transcription of vitamin D3-responsive target genes. Plays a central role in calcium homeostasis. Also functions as a receptor for the secondary bile acid lithocholic acid (LCA) and its metabolites. This is Vitamin D3 receptor (Vdr) from Mus musculus (Mouse).